The following is a 172-amino-acid chain: Protein GrpE (172 aa).

Residues 1–11 show a composition bias toward low complexity; sequence MSEENNSQNSN. Residues 1–22 form a disordered region; sequence MSEENNSQNSNPPNPENGEIAS.

Belongs to the GrpE family. As to quaternary structure, homodimer.

It is found in the cytoplasm. In terms of biological role, participates actively in the response to hyperosmotic and heat shock by preventing the aggregation of stress-denatured proteins, in association with DnaK and GrpE. It is the nucleotide exchange factor for DnaK and may function as a thermosensor. Unfolded proteins bind initially to DnaJ; upon interaction with the DnaJ-bound protein, DnaK hydrolyzes its bound ATP, resulting in the formation of a stable complex. GrpE releases ADP from DnaK; ATP binding to DnaK triggers the release of the substrate protein, thus completing the reaction cycle. Several rounds of ATP-dependent interactions between DnaJ, DnaK and GrpE are required for fully efficient folding. This chain is Protein GrpE, found in Bdellovibrio bacteriovorus (strain ATCC 15356 / DSM 50701 / NCIMB 9529 / HD100).